The sequence spans 244 residues: Tubulin-folding cofactor B (244 aa).

Methionine 1 carries the post-translational modification N-acetylmethionine. Tyrosine 98 bears the Phosphotyrosine mark. Serine 110 is subject to Phosphoserine. In terms of domain architecture, CAP-Gly spans 183–225; sequence GLTDFKPGYWIGIRYDEPLGKNDGSVNGKRYFECQAKYGAFVK. Lysine 219 bears the N6-acetyllysine mark.

This sequence belongs to the TBCB family. In terms of assembly, supercomplex made of cofactors A to E. Cofactors A and D function by capturing and stabilizing tubulin in a quasi-native conformation. Cofactor E binds to the cofactor D-tubulin complex; interaction with cofactor C then causes the release of tubulin polypeptides that are committed to the native state. Cofactors B and E can form a heterodimer which binds to alpha-tubulin and enhances their ability to dissociate tubulin heterodimers. Interacts with GAN. Interacts with DCTN1. In terms of processing, ubiquitinated in the presence of GAN which targets it for degradation by the proteasome. Post-translationally, phosphorylation by PAK1 is required for normal function.

The protein resides in the cytoplasm. Its subcellular location is the cytoskeleton. Functionally, binds to alpha-tubulin folding intermediates after their interaction with cytosolic chaperonin in the pathway leading from newly synthesized tubulin to properly folded heterodimer. Involved in regulation of tubulin heterodimer dissociation. May function as a negative regulator of axonal growth. This chain is Tubulin-folding cofactor B (TBCB), found in Bos taurus (Bovine).